Here is a 492-residue protein sequence, read N- to C-terminus: N-succinylglutamate 5-semialdehyde dehydrogenase (492 aa).

225–230 (GSSNTG) is a binding site for NAD(+). Residues Glu-248 and Cys-282 contribute to the active site.

Belongs to the aldehyde dehydrogenase family. AstD subfamily.

It carries out the reaction N-succinyl-L-glutamate 5-semialdehyde + NAD(+) + H2O = N-succinyl-L-glutamate + NADH + 2 H(+). Its pathway is amino-acid degradation; L-arginine degradation via AST pathway; L-glutamate and succinate from L-arginine: step 4/5. Functionally, catalyzes the NAD-dependent reduction of succinylglutamate semialdehyde into succinylglutamate. This chain is N-succinylglutamate 5-semialdehyde dehydrogenase, found in Colwellia psychrerythraea (strain 34H / ATCC BAA-681) (Vibrio psychroerythus).